A 119-amino-acid chain; its full sequence is Small ribosomal subunit protein uS13 (119 aa).

Residues glycine 94–lysine 119 form a disordered region.

It belongs to the universal ribosomal protein uS13 family. Part of the 30S ribosomal subunit. Forms a loose heterodimer with protein S19. Forms two bridges to the 50S subunit in the 70S ribosome.

Functionally, located at the top of the head of the 30S subunit, it contacts several helices of the 16S rRNA. In the 70S ribosome it contacts the 23S rRNA (bridge B1a) and protein L5 of the 50S subunit (bridge B1b), connecting the 2 subunits; these bridges are implicated in subunit movement. Contacts the tRNAs in the A and P-sites. This is Small ribosomal subunit protein uS13 from Alkalilimnicola ehrlichii (strain ATCC BAA-1101 / DSM 17681 / MLHE-1).